The primary structure comprises 202 residues: Holliday junction branch migration complex subunit RuvA (202 aa).

The segment at 1–64 is domain I; that stretch reads MIGRLRGTLA…EDAQLLYGFA (64 aa). The segment at 65-143 is domain II; that stretch reads GKRERDFFRE…AWETSPAMFA (79 aa). The tract at residues 144–154 is flexible linker; it reads LVPNQPDGPAP. The segment at 154–202 is domain III; sequence PVNTAENDAVSALISLGYKPQEASKAISAIKEKGLSSEDMIRRALKGMI.

This sequence belongs to the RuvA family. Homotetramer. Forms an RuvA(8)-RuvB(12)-Holliday junction (HJ) complex. HJ DNA is sandwiched between 2 RuvA tetramers; dsDNA enters through RuvA and exits via RuvB. An RuvB hexamer assembles on each DNA strand where it exits the tetramer. Each RuvB hexamer is contacted by two RuvA subunits (via domain III) on 2 adjacent RuvB subunits; this complex drives branch migration. In the full resolvosome a probable DNA-RuvA(4)-RuvB(12)-RuvC(2) complex forms which resolves the HJ.

It localises to the cytoplasm. Its function is as follows. The RuvA-RuvB-RuvC complex processes Holliday junction (HJ) DNA during genetic recombination and DNA repair, while the RuvA-RuvB complex plays an important role in the rescue of blocked DNA replication forks via replication fork reversal (RFR). RuvA specifically binds to HJ cruciform DNA, conferring on it an open structure. The RuvB hexamer acts as an ATP-dependent pump, pulling dsDNA into and through the RuvAB complex. HJ branch migration allows RuvC to scan DNA until it finds its consensus sequence, where it cleaves and resolves the cruciform DNA. The polypeptide is Holliday junction branch migration complex subunit RuvA (Pseudomonas fluorescens (strain Pf0-1)).